Reading from the N-terminus, the 504-residue chain is D-alanine--D-alanyl carrier protein ligase (504 aa).

152 to 153 lines the ATP pocket; it reads TS. Asp-197 contributes to the D-alanine binding site. 292–297 provides a ligand contact to ATP; it reads NTYGPT. Residue Val-301 coordinates D-alanine. Residues Asp-383, 394-397, and Lys-492 contribute to the ATP site; that span reads YNGR. Position 492 (Lys-492) interacts with D-alanine.

Belongs to the ATP-dependent AMP-binding enzyme family. DltA subfamily.

The protein resides in the cytoplasm. It carries out the reaction holo-[D-alanyl-carrier protein] + D-alanine + ATP = D-alanyl-[D-alanyl-carrier protein] + AMP + diphosphate. Its pathway is cell wall biogenesis; lipoteichoic acid biosynthesis. Functionally, catalyzes the first step in the D-alanylation of lipoteichoic acid (LTA), the activation of D-alanine and its transfer onto the D-alanyl carrier protein (Dcp) DltC. In an ATP-dependent two-step reaction, forms a high energy D-alanyl-AMP intermediate, followed by transfer of the D-alanyl residue as a thiol ester to the phosphopantheinyl prosthetic group of the Dcp. D-alanylation of LTA plays an important role in modulating the properties of the cell wall in Gram-positive bacteria, influencing the net charge of the cell wall. This chain is D-alanine--D-alanyl carrier protein ligase, found in Bacillus cereus (strain G9842).